Reading from the N-terminus, the 165-residue chain is Ribosome maturation factor RimM (165 aa).

The PRC barrel domain maps to 92–163 (EARHYWADLE…RVVVDPPEGL (72 aa)).

It belongs to the RimM family. As to quaternary structure, binds ribosomal protein uS19.

It localises to the cytoplasm. Its function is as follows. An accessory protein needed during the final step in the assembly of 30S ribosomal subunit, possibly for assembly of the head region. Essential for efficient processing of 16S rRNA. May be needed both before and after RbfA during the maturation of 16S rRNA. It has affinity for free ribosomal 30S subunits but not for 70S ribosomes. The chain is Ribosome maturation factor RimM from Anaeromyxobacter sp. (strain Fw109-5).